We begin with the raw amino-acid sequence, 497 residues long: Cytochrome P450 26A1 (497 aa).

Position 442 (Cys-442) interacts with heme.

Belongs to the cytochrome P450 family. The cofactor is heme.

Its subcellular location is the endoplasmic reticulum membrane. The protein localises to the microsome membrane. It carries out the reaction all-trans-retinoate + reduced [NADPH--hemoprotein reductase] + O2 = all-trans-(4S)-hydroxyretinoate + oxidized [NADPH--hemoprotein reductase] + H2O + H(+). It catalyses the reaction all-trans-(4S)-hydroxyretinoate + reduced [NADPH--hemoprotein reductase] + O2 = all-trans-(4S,16)-dihydroxyretinoate + oxidized [NADPH--hemoprotein reductase] + H2O + H(+). The catalysed reaction is all-trans-retinoate + reduced [NADPH--hemoprotein reductase] + O2 = all-trans-18-hydroxyretinoate + oxidized [NADPH--hemoprotein reductase] + H2O + H(+). Functionally, a cytochrome P450 monooxygenase involved in the metabolism of retinoates (RAs), the active metabolites of vitamin A, and critical signaling molecules in animals. RAs exist as at least four different isomers: all-trans-RA (atRA), 9-cis-RA, 13-cis-RA, and 9,13-dicis-RA, where atRA is considered to be the biologically active isomer, although 9-cis-RA and 13-cis-RA also have activity. Catalyzes the hydroxylation of atRA primarily at C-4 and C-18, thereby contributing to the regulation of atRA homeostasis and signaling. Hydroxylation of atRA limits its biological activity and initiates a degradative process leading to its eventual elimination. Involved in the convertion of atRA to all-trans-4-oxo-RA. Able to metabolize other RAs such as 9-cis, 13-cis and 9,13-di-cis RA. Can oxidize all-trans-13,14-dihydroretinoate (DRA) to metabolites which could include all-trans-4-oxo-DRA, all-trans-4-hydroxy-DRA, all-trans-5,8-epoxy-DRA, and all-trans-18-hydroxy-DRA. May play a role in the oxidative metabolism of xenobiotics such as tazarotenic acid. This chain is Cytochrome P450 26A1, found in Mus musculus (Mouse).